A 173-amino-acid polypeptide reads, in one-letter code: Bifunctional protein PyrR (173 aa).

The short motif at 93 to 105 (IILIDDVLYTGRT) is the PRPP-binding element.

It belongs to the purine/pyrimidine phosphoribosyltransferase family. PyrR subfamily. In terms of assembly, homodimer and homohexamer; in equilibrium.

The catalysed reaction is UMP + diphosphate = 5-phospho-alpha-D-ribose 1-diphosphate + uracil. Regulates transcriptional attenuation of the pyrimidine nucleotide (pyr) operon by binding in a uridine-dependent manner to specific sites on pyr mRNA. This disrupts an antiterminator hairpin in the RNA and favors formation of a downstream transcription terminator, leading to a reduced expression of downstream genes. In terms of biological role, also displays a weak uracil phosphoribosyltransferase activity which is not physiologically significant. The sequence is that of Bifunctional protein PyrR from Streptococcus agalactiae serotype Ia (strain ATCC 27591 / A909 / CDC SS700).